The sequence spans 570 residues: Urease subunit alpha (570 aa).

The 436-residue stretch at 135–570 folds into the Urease domain; that stretch reads GGLDIHVHFN…ELPLAQRYHL (436 aa). Residues His140, His142, and Lys219 each coordinate Ni(2+). Position 219 is an N6-carboxylysine (Lys219). Substrate is bound at residue His221. Ni(2+) contacts are provided by His248 and His274. Residue His322 is the Proton donor of the active site. Ni(2+) is bound at residue Asp362.

This sequence belongs to the metallo-dependent hydrolases superfamily. Urease alpha subunit family. In terms of assembly, heterotrimer of UreA (gamma), UreB (beta) and UreC (alpha) subunits. Three heterotrimers associate to form the active enzyme. Requires Ni cation as cofactor. In terms of processing, carboxylation allows a single lysine to coordinate two nickel ions.

The protein resides in the cytoplasm. It carries out the reaction urea + 2 H2O + H(+) = hydrogencarbonate + 2 NH4(+). It functions in the pathway nitrogen metabolism; urea degradation; CO(2) and NH(3) from urea (urease route): step 1/1. This chain is Urease subunit alpha, found in Natronomonas pharaonis (strain ATCC 35678 / DSM 2160 / CIP 103997 / JCM 8858 / NBRC 14720 / NCIMB 2260 / Gabara) (Halobacterium pharaonis).